We begin with the raw amino-acid sequence, 246 residues long: Carboxylesterase (246 aa).

Serine 93 serves as the catalytic Nucleophile. Residues aspartate 192 and histidine 222 each act as charge relay system in the active site.

It belongs to the lipase/esterase LIP3/BchO family. As to quaternary structure, homodimer.

The enzyme catalyses a carboxylic ester + H2O = an alcohol + a carboxylate + H(+). Functionally, involved in the detoxification of xenobiotics. Shows maximal activity with C6 substrates, with gradually decreasing activity from C8 to C12 substrates. No activity for higher chain length substrates acids rather than long-chain ones. The polypeptide is Carboxylesterase (est) (Geobacillus stearothermophilus (Bacillus stearothermophilus)).